Reading from the N-terminus, the 99-residue chain is Large ribosomal subunit protein uL23 (99 aa).

Belongs to the universal ribosomal protein uL23 family. As to quaternary structure, part of the 50S ribosomal subunit. Contacts protein L29, and trigger factor when it is bound to the ribosome.

Functionally, one of the early assembly proteins it binds 23S rRNA. One of the proteins that surrounds the polypeptide exit tunnel on the outside of the ribosome. Forms the main docking site for trigger factor binding to the ribosome. This is Large ribosomal subunit protein uL23 from Pseudomonas savastanoi pv. phaseolicola (strain 1448A / Race 6) (Pseudomonas syringae pv. phaseolicola (strain 1448A / Race 6)).